Reading from the N-terminus, the 218-residue chain is UPF0502 protein VS_II0353 (218 aa).

Belongs to the UPF0502 family.

This chain is UPF0502 protein VS_II0353, found in Vibrio atlanticus (strain LGP32) (Vibrio splendidus (strain Mel32)).